We begin with the raw amino-acid sequence, 448 residues long: Phosphoglucosamine mutase (448 aa).

Ser-101 functions as the Phosphoserine intermediate in the catalytic mechanism. Mg(2+) contacts are provided by Ser-101, Asp-242, Asp-244, and Asp-246. The residue at position 101 (Ser-101) is a Phosphoserine.

This sequence belongs to the phosphohexose mutase family. Mg(2+) serves as cofactor. Post-translationally, activated by phosphorylation.

It catalyses the reaction alpha-D-glucosamine 1-phosphate = D-glucosamine 6-phosphate. Functionally, catalyzes the conversion of glucosamine-6-phosphate to glucosamine-1-phosphate. This is Phosphoglucosamine mutase from Afipia carboxidovorans (strain ATCC 49405 / DSM 1227 / KCTC 32145 / OM5) (Oligotropha carboxidovorans).